Consider the following 669-residue polypeptide: DNA ligase (669 aa).

NAD(+) is bound by residues 34–38, 83–84, and E113; these read DAEYD and SL. The N6-AMP-lysine intermediate role is filled by K115. 4 residues coordinate NAD(+): R136, E170, K286, and K310. Residues C404, C407, C422, and C427 each coordinate Zn(2+). One can recognise a BRCT domain in the interval 591-669; that stretch reads IADSPFAGKT…EEALVKAISH (79 aa).

The protein belongs to the NAD-dependent DNA ligase family. LigA subfamily. It depends on Mg(2+) as a cofactor. Mn(2+) is required as a cofactor.

The enzyme catalyses NAD(+) + (deoxyribonucleotide)n-3'-hydroxyl + 5'-phospho-(deoxyribonucleotide)m = (deoxyribonucleotide)n+m + AMP + beta-nicotinamide D-nucleotide.. Its function is as follows. DNA ligase that catalyzes the formation of phosphodiester linkages between 5'-phosphoryl and 3'-hydroxyl groups in double-stranded DNA using NAD as a coenzyme and as the energy source for the reaction. It is essential for DNA replication and repair of damaged DNA. In Halalkalibacterium halodurans (strain ATCC BAA-125 / DSM 18197 / FERM 7344 / JCM 9153 / C-125) (Bacillus halodurans), this protein is DNA ligase.